The primary structure comprises 491 residues: Protein nucleotidyltransferase YdiU (491 aa).

Residues Gly94, Gly96, Arg97, Lys117, Asp129, Gly130, Arg180, and Arg187 each contribute to the ATP site. Asp256 acts as the Proton acceptor in catalysis. Residues Asn257 and Asp266 each contribute to the Mg(2+) site. Asp266 serves as a coordination point for ATP.

The protein belongs to the SELO family. Mg(2+) is required as a cofactor. Mn(2+) serves as cofactor.

The catalysed reaction is L-seryl-[protein] + ATP = 3-O-(5'-adenylyl)-L-seryl-[protein] + diphosphate. The enzyme catalyses L-threonyl-[protein] + ATP = 3-O-(5'-adenylyl)-L-threonyl-[protein] + diphosphate. It carries out the reaction L-tyrosyl-[protein] + ATP = O-(5'-adenylyl)-L-tyrosyl-[protein] + diphosphate. It catalyses the reaction L-histidyl-[protein] + UTP = N(tele)-(5'-uridylyl)-L-histidyl-[protein] + diphosphate. The catalysed reaction is L-seryl-[protein] + UTP = O-(5'-uridylyl)-L-seryl-[protein] + diphosphate. The enzyme catalyses L-tyrosyl-[protein] + UTP = O-(5'-uridylyl)-L-tyrosyl-[protein] + diphosphate. Nucleotidyltransferase involved in the post-translational modification of proteins. It can catalyze the addition of adenosine monophosphate (AMP) or uridine monophosphate (UMP) to a protein, resulting in modifications known as AMPylation and UMPylation. This is Protein nucleotidyltransferase YdiU from Clostridium botulinum (strain 657 / Type Ba4).